Reading from the N-terminus, the 852-residue chain is Lon protease homolog 2, peroxisomal (852 aa).

At Ser-2 the chain carries N-acetylserine. Positions 13 to 222 (LPLLLTHESV…MTIPLLVRQI (210 aa)) constitute a Lon N-terminal domain. Position 375-382 (375-382 (GPPGVGKT)) interacts with ATP. The region spanning 651–837 (LSQPGVAIGL…DEVLNAAFDG (187 aa)) is the Lon proteolytic domain. Catalysis depends on residues Ser-743 and Lys-786. The Microbody targeting signal signature appears at 850–852 (SKL).

This sequence belongs to the peptidase S16 family. In terms of assembly, interacts with PEX5. Interacts with TYSND1. May interact with enzymes involved in beta-oxidation of fatty acids, including ACOX1/AOX.

It localises to the peroxisome matrix. It catalyses the reaction Hydrolysis of proteins in presence of ATP.. Functionally, ATP-dependent serine protease that mediates the selective degradation of misfolded and unassembled polypeptides in the peroxisomal matrix. Necessary for type 2 peroxisome targeting signal (PTS2)-containing protein processing and facilitates peroxisome matrix protein import. May indirectly regulate peroxisomal fatty acid beta-oxidation through degradation of the self-processed forms of TYSND1. The sequence is that of Lon protease homolog 2, peroxisomal (Lonp2) from Mus musculus (Mouse).